Reading from the N-terminus, the 171-residue chain is UPF0398 protein M6_Spy1399 (171 aa).

Belongs to the UPF0398 family.

This chain is UPF0398 protein M6_Spy1399, found in Streptococcus pyogenes serotype M6 (strain ATCC BAA-946 / MGAS10394).